The sequence spans 90 residues: Conotoxin Mr22.1 (90 aa).

Positions 1–18 are cleaved as a signal peptide; that stretch reads MMTRVFFAMFFLMALTEG. A propeptide spanning residues 19–49 is cleaved from the precursor; that stretch reads WPRLYDSDCVRGRNMHITCFKDQTCGLTVKR. Trp75 is modified (6'-bromotryptophan).

The protein belongs to the E superfamily. In terms of processing, contains 4 disulfide bonds. As to expression, expressed by the venom duct.

It is found in the secreted. This Conus marmoreus (Marble cone) protein is Conotoxin Mr22.1.